A 200-amino-acid polypeptide reads, in one-letter code: Recombination protein RecR (200 aa).

The C4-type zinc finger occupies 59-74 (CSVCFHLSADPVCDIC). The Toprim domain maps to 82–176 (TVICVVADSR…RVTRIAFGLP (95 aa)).

This sequence belongs to the RecR family.

Functionally, may play a role in DNA repair. It seems to be involved in an RecBC-independent recombinational process of DNA repair. It may act with RecF and RecO. In Acaryochloris marina (strain MBIC 11017), this protein is Recombination protein RecR.